A 133-amino-acid chain; its full sequence is Small ribosomal subunit protein uS9 (133 aa).

The protein belongs to the universal ribosomal protein uS9 family.

This chain is Small ribosomal subunit protein uS9, found in Ureaplasma urealyticum serovar 10 (strain ATCC 33699 / Western).